The primary structure comprises 524 residues: Nuclear distribution protein PAC1 (524 aa).

The stretch at 65-90 (STVLRLQRKIIDLENEVGTLRSIVDG) forms a coiled coil. 8 WD repeats span residues 121 to 160 (QQNQ…TSIP), 166 to 217 (AHTR…HIRT), 220 to 262 (GHDH…KSFT), 277 to 317 (NSQL…GLAL), 353 to 394 (IPQE…LIPH), 415 to 454 (GHQS…VTGS), 463 to 492 (GHDG…DATE), and 493 to 524 (EESH…KLWS).

The protein belongs to the WD repeat LIS1/nudF family. Self-associates. Interacts with NDL1 and dynein.

It localises to the cytoplasm. It is found in the cytoskeleton. The protein resides in the spindle pole. Its function is as follows. Positively regulates the activity of the minus-end directed microtubule motor protein dynein. Plays a central role in positioning the mitotic spindle at the bud neck during cell division. Targets cytoplasmic dynein to microtubule plus ends, thereby promoting dynein-mediated microtubule sliding along the bud cortex and consequently the movement of the mitotic spindle to the bud neck. The protein is Nuclear distribution protein PAC1 of Scheffersomyces stipitis (strain ATCC 58785 / CBS 6054 / NBRC 10063 / NRRL Y-11545) (Yeast).